Here is a 1118-residue protein sequence, read N- to C-terminus: uncharacterized protein (1118 aa).

Disordered stretches follow at residues 1 to 69 (MESG…NGED), 1044 to 1071 (PKSVSSSSSLGRKRGRKRENSEEEEKID), and 1090 to 1118 (IRPTVNVEEDQNIKTEIEDSDDLEDSFEL). The segment covering 13–34 (DMVEEDNDEDSFEEPACEDSFD) has biased composition (acidic residues). Residues 35–60 (SQEASSKANEPQNDSFDEPIQSSVSK) show a composition bias toward polar residues. Positions 1107–1118 (EDSDDLEDSFEL) are enriched in acidic residues.

This is an uncharacterized protein from Caenorhabditis elegans.